Consider the following 974-residue polypeptide: MAGKARVHELAKELGVTSKELLATLKEQGEFVKSASSTVEAPVARRLRESFPSAKSADSAARPAAKPGAPAPSTPATSAKPGGPRPGPKPAAPAPAAPAAAAPAATPAAQAPAPAAPAASTATPAAPASNAPKPGRPTPAAPAPAAPAAPAAPAAASTPAAPSTGAKPGGPRPGPKPPRVGNNPYSSAPAERPAPRPAPGAPRPGAPRPAPGQGGPRPAPGQGGPRPAPGQGGPRPAPGQGGPRPAPGQGGPRPSPGSMPPRPNPGAMPARSARPAPGGRPGRPGGAPGGRPGGGGGGYRGGGAPGAGAGAPGGGAPAGGFRGRPGGGGRPGQRGAAAGAFGRPGGAPRRGRKSKRQKRQEYDSMQAPAVGGVRLPRGNGETIRLARGASLSDFAEKIDANPAALVQALFNLGEMVTATQSVNDETLELLGGEMNYVVQVVSPEDEDRELLDSFDLTYGEDEGGEEDLESRPPVVTVMGHVDHGKTRLLDTIRKANVREGEAGGITQHIGAYQVLTELDGNERLVTFIDTPGHEAFTAMRARGAKATDLAILVVAADDGVMPQTVEAINHAQAADVPIVVAVNKIDKEGANPDKIRQQLTEYGLVAEEYGGDTMFVDISAKQGTNIDALLEAVLLTADAALDLRANPDMDAQGVAIEAHLDRGRGPVATVLIQRGTLRVGDSIVAGDAYGRVRRMVDEHGDDVLEAMPSRPVQVVGFTSVPGAGDNLLVVDEDRIARQIADRRNARKRNALAAKSRKRISLEDLDSALKETSQLNLILKGDNSGTVEALEEALHGIEIDDEVQLRVIDRGVGGVTETNVNLAAASNAIIIGFNVRAEGKATELANREGVDIRYYSVIYQAIDEVEKALKGMLKPIYEEVELGKAEIRAMFRSSKVGNIAGCLVTSGTIRRNAKARLLRDNTVVAETVTISSLKREKEDAVEVREGYECGLTLTYSDIKVGDVIEAYELREKPRD.

A disordered region spans residues 31 to 376 (FVKSASSTVE…APAVGGVRLP (346 aa)). Residues 52–68 (PSAKSADSAARPAAKPG) are compositionally biased toward low complexity. Pro residues predominate over residues 83–96 (GPRPGPKPAAPAPA). The segment covering 97-133 (APAAAAPAATPAAQAPAPAAPAASTATPAAPASNAPK) has biased composition (low complexity). Residues 134 to 147 (PGRPTPAAPAPAAP) are compositionally biased toward pro residues. Low complexity-rich tracts occupy residues 148-166 (AAPAAPAAASTPAAPSTGA) and 179-191 (RVGNNPYSSAPAE). 2 stretches are compositionally biased toward pro residues: residues 195–210 (PRPAPGAPRPGAPRPA) and 253–266 (RPSPGSMPPRPNPG). Low complexity predominate over residues 267 to 277 (AMPARSARPAP). The span at 279 to 332 (GRPGRPGGAPGGRPGGGGGGYRGGGAPGAGAGAPGGGAPAGGFRGRPGGGGRPG) shows a compositional bias: gly residues. The segment covering 349–358 (RRGRKSKRQK) has biased composition (basic residues). The tr-type G domain occupies 470–641 (SRPPVVTVMG…AVLLTADAAL (172 aa)). The interval 479–486 (GHVDHGKT) is G1. 479–486 (GHVDHGKT) is a binding site for GTP. The G2 stretch occupies residues 504–508 (GITQH). Residues 529–532 (DTPG) form a G3 region. Residues 529–533 (DTPGH) and 583–586 (NKID) contribute to the GTP site. The G4 stretch occupies residues 583-586 (NKID). The segment at 619–621 (SAK) is G5.

It belongs to the TRAFAC class translation factor GTPase superfamily. Classic translation factor GTPase family. IF-2 subfamily.

It is found in the cytoplasm. Its function is as follows. One of the essential components for the initiation of protein synthesis. Protects formylmethionyl-tRNA from spontaneous hydrolysis and promotes its binding to the 30S ribosomal subunits. Also involved in the hydrolysis of GTP during the formation of the 70S ribosomal complex. The sequence is that of Translation initiation factor IF-2 from Rhodococcus opacus (strain B4).